A 312-amino-acid polypeptide reads, in one-letter code: MEPLNRTEVSEFFLKGFSGYPALEHLLFPLCSAMYLVTLLGNTAIMAVSVLDIHLHTPVYFFLGNLSTLDICYTPTFVPLMLVHLLSSRKTISFAVCAIQMCLSLSTGSTECLLLAITAYDRYLAICQPLRYHVLMSHRLCVLLMGAAWVLCLLKSVTEMVISMRLPFCGHHVVSHFTCKILAVLKLACGNTSVSEDFLLAGSILLLPVPLAFICLSYLLILATILRVPSAARCCKAFSTCLAHLAVVLLFYGTIIFMYLKPKSKEAHISDEVFTVLYAMVTTMLNPTIYSLRNKEVKEAARKVWGRSRASR.

The Extracellular portion of the chain corresponds to 1-25 (MEPLNRTEVSEFFLKGFSGYPALEH). N-linked (GlcNAc...) asparagine glycosylation occurs at asparagine 5. A helical membrane pass occupies residues 26–46 (LLFPLCSAMYLVTLLGNTAIM). The Cytoplasmic segment spans residues 47 to 54 (AVSVLDIH). The chain crosses the membrane as a helical span at residues 55–75 (LHTPVYFFLGNLSTLDICYTP). The Extracellular segment spans residues 76–99 (TFVPLMLVHLLSSRKTISFAVCAI). Cysteine 97 and cysteine 189 are disulfide-bonded. A helical transmembrane segment spans residues 100–120 (QMCLSLSTGSTECLLLAITAY). At 121-139 (DRYLAICQPLRYHVLMSHR) the chain is on the cytoplasmic side. A helical transmembrane segment spans residues 140–160 (LCVLLMGAAWVLCLLKSVTEM). At 161–197 (VISMRLPFCGHHVVSHFTCKILAVLKLACGNTSVSED) the chain is on the extracellular side. Residue asparagine 191 is glycosylated (N-linked (GlcNAc...) asparagine). The helical transmembrane segment at 198-217 (FLLAGSILLLPVPLAFICLS) threads the bilayer. Over 218-237 (YLLILATILRVPSAARCCKA) the chain is Cytoplasmic. Residues 238-258 (FSTCLAHLAVVLLFYGTIIFM) traverse the membrane as a helical segment. At 259 to 271 (YLKPKSKEAHISD) the chain is on the extracellular side. A helical membrane pass occupies residues 272–292 (EVFTVLYAMVTTMLNPTIYSL). Over 293–312 (RNKEVKEAARKVWGRSRASR) the chain is Cytoplasmic.

This sequence belongs to the G-protein coupled receptor 1 family.

Its subcellular location is the cell membrane. In terms of biological role, odorant receptor. In Homo sapiens (Human), this protein is Olfactory receptor 13J1 (OR13J1).